The primary structure comprises 130 residues: Small ribosomal subunit protein uS9 (130 aa).

A disordered region spans residues 101 to 130; the sequence is AGLLTRDARMKERKKPGLKKARKASQFSKR. Residues 111-130 show a composition bias toward basic residues; sequence KERKKPGLKKARKASQFSKR.

The protein belongs to the universal ribosomal protein uS9 family.

This chain is Small ribosomal subunit protein uS9, found in Levilactobacillus brevis (strain ATCC 367 / BCRC 12310 / CIP 105137 / JCM 1170 / LMG 11437 / NCIMB 947 / NCTC 947) (Lactobacillus brevis).